Reading from the N-terminus, the 151-residue chain is Probable transcriptional regulator syrB2 (151 aa).

The segment at 1–61 is disordered; that stretch reads MADESNTGSI…PRRYSEQQRK (61 aa). Positions 11 to 23 are enriched in low complexity; that stretch reads AAAVAPNADVKAP. Residues 24–35 show a composition bias toward basic residues; sequence AAKKKRSPRRQK.

Belongs to the SyrB family.

Functionally, seems to affect the transcription of cya3. May be negatively autoregulated. This Rhizobium meliloti (strain 1021) (Ensifer meliloti) protein is Probable transcriptional regulator syrB2 (syrB2).